Reading from the N-terminus, the 168-residue chain is CASP-like protein UU-1 (168 aa).

Residues 1–17 (MVELESQEAVTVASTAD) lie on the Cytoplasmic side of the membrane. A helical transmembrane segment spans residues 18–38 (IAVDVSLRLLAAATSLAAAVV). Over 39-54 (VAANHQQRWGIRVDFT) the chain is Extracellular. A helical transmembrane segment spans residues 55–75 (LFQVWIGFVAVNLVCTVYAAA). The Cytoplasmic segment spans residues 76 to 95 (TAAAAARKAMGRWWLHHADA). Residues 96-116 (VVVNLEAAATAGAGAIGSIAM) traverse the membrane as a helical segment. The Extracellular portion of the chain corresponds to 117-136 (WGNEASGWYAVCRLYRRYCN). A helical transmembrane segment spans residues 137 to 157 (AGAAALALSLAAVLLLGVACA). The Cytoplasmic segment spans residues 158-168 (RSRYPKMPPTT).

This sequence belongs to the Casparian strip membrane proteins (CASP) family. In terms of assembly, homodimer and heterodimers.

The protein localises to the cell membrane. The chain is CASP-like protein UU-1 from Oryza sativa subsp. japonica (Rice).